The primary structure comprises 549 residues: CTP synthase (549 aa).

The interval 1–267 (MAKFVFITGG…CREVLDVLQL (267 aa)) is amidoligase domain. Serine 13 contacts CTP. Serine 13 is a binding site for UTP. ATP is bound by residues 14–19 (SIGKGI) and aspartate 71. Mg(2+) is bound by residues aspartate 71 and glutamate 141. Residues 148–150 (DIE), 188–193 (KTKPTQ), and lysine 224 each bind CTP. UTP contacts are provided by residues 188 to 193 (KTKPTQ) and lysine 224. A Glutamine amidotransferase type-1 domain is found at 292 to 534 (KVALVGKYVQ…IEAAQQRLPD (243 aa)). L-glutamine is bound at residue glycine 354. The Nucleophile; for glutamine hydrolysis role is filled by cysteine 381. Residues 382 to 385 (LGMQ), glutamate 405, and arginine 462 contribute to the L-glutamine site. Active-site residues include histidine 507 and glutamate 509.

It belongs to the CTP synthase family. In terms of assembly, homotetramer.

It carries out the reaction UTP + L-glutamine + ATP + H2O = CTP + L-glutamate + ADP + phosphate + 2 H(+). The enzyme catalyses L-glutamine + H2O = L-glutamate + NH4(+). The catalysed reaction is UTP + NH4(+) + ATP = CTP + ADP + phosphate + 2 H(+). It functions in the pathway pyrimidine metabolism; CTP biosynthesis via de novo pathway; CTP from UDP: step 2/2. With respect to regulation, allosterically activated by GTP, when glutamine is the substrate; GTP has no effect on the reaction when ammonia is the substrate. The allosteric effector GTP functions by stabilizing the protein conformation that binds the tetrahedral intermediate(s) formed during glutamine hydrolysis. Inhibited by the product CTP, via allosteric rather than competitive inhibition. Catalyzes the ATP-dependent amination of UTP to CTP with either L-glutamine or ammonia as the source of nitrogen. Regulates intracellular CTP levels through interactions with the four ribonucleotide triphosphates. This is CTP synthase from Synechococcus sp. (strain CC9902).